Reading from the N-terminus, the 270-residue chain is Formamidopyrimidine-DNA glycosylase (270 aa).

Pro2 serves as the catalytic Schiff-base intermediate with DNA. The active-site Proton donor is Glu3. Lys58 serves as the catalytic Proton donor; for beta-elimination activity. DNA contacts are provided by His91, Arg110, and Lys151. The FPG-type zinc-finger motif lies at 236–270 (LVYGKAGAPCTECNTPLKEIRMNNRSTVYCPRCQR). Catalysis depends on Arg260, which acts as the Proton donor; for delta-elimination activity.

The protein belongs to the FPG family. As to quaternary structure, monomer. Zn(2+) is required as a cofactor.

The enzyme catalyses Hydrolysis of DNA containing ring-opened 7-methylguanine residues, releasing 2,6-diamino-4-hydroxy-5-(N-methyl)formamidopyrimidine.. The catalysed reaction is 2'-deoxyribonucleotide-(2'-deoxyribose 5'-phosphate)-2'-deoxyribonucleotide-DNA = a 3'-end 2'-deoxyribonucleotide-(2,3-dehydro-2,3-deoxyribose 5'-phosphate)-DNA + a 5'-end 5'-phospho-2'-deoxyribonucleoside-DNA + H(+). In terms of biological role, involved in base excision repair of DNA damaged by oxidation or by mutagenic agents. Acts as a DNA glycosylase that recognizes and removes damaged bases. Has a preference for oxidized purines, such as 7,8-dihydro-8-oxoguanine (8-oxoG). Has AP (apurinic/apyrimidinic) lyase activity and introduces nicks in the DNA strand. Cleaves the DNA backbone by beta-delta elimination to generate a single-strand break at the site of the removed base with both 3'- and 5'-phosphates. In Marinobacter nauticus (strain ATCC 700491 / DSM 11845 / VT8) (Marinobacter aquaeolei), this protein is Formamidopyrimidine-DNA glycosylase.